The following is a 287-amino-acid chain: Energy-coupling factor transporter ATP-binding protein EcfA (287 aa).

Positions 19 to 252 (FEIQNVSFSY…EEFLASSALD (234 aa)) constitute an ABC transporter domain. Position 52 to 59 (52 to 59 (GHNGSGKS)) interacts with ATP.

It belongs to the ABC transporter superfamily. Energy-coupling factor EcfA family. As to quaternary structure, forms a stable energy-coupling factor (ECF) transporter complex composed of 2 membrane-embedded substrate-binding proteins (S component), 2 ATP-binding proteins (A component) and 2 transmembrane proteins (T component).

It is found in the cell membrane. In terms of biological role, ATP-binding (A) component of a common energy-coupling factor (ECF) ABC-transporter complex. Unlike classic ABC transporters this ECF transporter provides the energy necessary to transport a number of different substrates. In Malacoplasma penetrans (strain HF-2) (Mycoplasma penetrans), this protein is Energy-coupling factor transporter ATP-binding protein EcfA.